Consider the following 344-residue polypeptide: Uroporphyrinogen decarboxylase (344 aa).

Residues 27–31 (RQAGR), Phe46, Asp77, Tyr153, Thr208, and His324 each bind substrate.

It belongs to the uroporphyrinogen decarboxylase family. As to quaternary structure, homodimer.

It is found in the cytoplasm. The enzyme catalyses uroporphyrinogen III + 4 H(+) = coproporphyrinogen III + 4 CO2. It functions in the pathway porphyrin-containing compound metabolism; protoporphyrin-IX biosynthesis; coproporphyrinogen-III from 5-aminolevulinate: step 4/4. Functionally, catalyzes the decarboxylation of four acetate groups of uroporphyrinogen-III to yield coproporphyrinogen-III. This is Uroporphyrinogen decarboxylase from Bradyrhizobium diazoefficiens (strain JCM 10833 / BCRC 13528 / IAM 13628 / NBRC 14792 / USDA 110).